The primary structure comprises 232 residues: Orotidine 5'-phosphate decarboxylase (232 aa).

Residues aspartate 11, lysine 33, 60–69, threonine 120, arginine 181, glutamine 190, glycine 210, and arginine 211 contribute to the substrate site; that span reads DLKFHDIPNT. The active-site Proton donor is lysine 62.

The protein belongs to the OMP decarboxylase family. Type 1 subfamily. In terms of assembly, homodimer.

It carries out the reaction orotidine 5'-phosphate + H(+) = UMP + CO2. The protein operates within pyrimidine metabolism; UMP biosynthesis via de novo pathway; UMP from orotate: step 2/2. In terms of biological role, catalyzes the decarboxylation of orotidine 5'-monophosphate (OMP) to uridine 5'-monophosphate (UMP). The chain is Orotidine 5'-phosphate decarboxylase from Vibrio vulnificus (strain YJ016).